The following is a 418-amino-acid chain: Putative ion-transport protein YfeO (418 aa).

A run of 12 helical transmembrane segments spans residues 10-30, 54-74, 99-119, 120-140, 149-169, 186-206, 223-243, 258-278, 300-320, 322-342, 343-363, and 371-391; these read LLLS…LIVV, DSPL…GLVI, ALPG…SLGP, EHPI…RLLP, ILAS…AALI, LFAP…FFHP, ILSG…AVWC, VLVL…GGPV, DYFL…ASGF, GGRI…LHEH, VPAV…VLVV, and LFMA…CIVM.

It belongs to the chloride channel (TC 2.A.49) family.

Its subcellular location is the cell membrane. In Escherichia coli O9:H4 (strain HS), this protein is Putative ion-transport protein YfeO.